We begin with the raw amino-acid sequence, 218 residues long: Uridine kinase (218 aa).

An ATP-binding site is contributed by 16–23 (GGSGSGKT).

Belongs to the uridine kinase family.

The protein resides in the cytoplasm. It carries out the reaction uridine + ATP = UMP + ADP + H(+). The enzyme catalyses cytidine + ATP = CMP + ADP + H(+). It functions in the pathway pyrimidine metabolism; CTP biosynthesis via salvage pathway; CTP from cytidine: step 1/3. The protein operates within pyrimidine metabolism; UMP biosynthesis via salvage pathway; UMP from uridine: step 1/1. The chain is Uridine kinase from Limosilactobacillus reuteri (strain DSM 20016) (Lactobacillus reuteri).